The primary structure comprises 692 residues: Elongation factor G (692 aa).

Residues 8–282 enclose the tr-type G domain; the sequence is EKTRNIGIMA…GVVDYLPSPV (275 aa). GTP contacts are provided by residues 17-24, 81-85, and 135-138; these read AHIDAGKT, DTPGH, and NKMD.

Belongs to the TRAFAC class translation factor GTPase superfamily. Classic translation factor GTPase family. EF-G/EF-2 subfamily.

The protein resides in the cytoplasm. In terms of biological role, catalyzes the GTP-dependent ribosomal translocation step during translation elongation. During this step, the ribosome changes from the pre-translocational (PRE) to the post-translocational (POST) state as the newly formed A-site-bound peptidyl-tRNA and P-site-bound deacylated tRNA move to the P and E sites, respectively. Catalyzes the coordinated movement of the two tRNA molecules, the mRNA and conformational changes in the ribosome. The chain is Elongation factor G from Geobacillus kaustophilus (strain HTA426).